The primary structure comprises 532 residues: L-proline--[L-prolyl-carrier protein] ligase (532 aa).

The tract at residues 510–532 (KTDYRRLGLDAPPRPAAPLGTAR) is disordered.

It belongs to the ATP-dependent AMP-binding enzyme family.

It catalyses the reaction holo-[peptidyl-carrier protein] + L-proline + ATP = L-prolyl-[peptidyl-carrier protein] + AMP + diphosphate. In terms of biological role, involved in the biosynthesis of undecylprodigiosin. Catalyzes the conversion of L-proline to L-prolyl-AMP and the transfer of the L-prolyl group to acyl carrier protein RedO. In Streptomyces coelicolor (strain ATCC BAA-471 / A3(2) / M145), this protein is L-proline--[L-prolyl-carrier protein] ligase.